The following is a 275-amino-acid chain: Formamidopyrimidine-DNA glycosylase (275 aa).

Residue Pro-2 is the Schiff-base intermediate with DNA of the active site. Glu-3 acts as the Proton donor in catalysis. The active-site Proton donor; for beta-elimination activity is the Lys-58. DNA contacts are provided by His-91 and Arg-110. An FPG-type zinc finger spans residues 238 to 272 (QVYGQTGKPCPRCGQAIVKLKVGGRGTHICPKCQK). Arg-262 acts as the Proton donor; for delta-elimination activity in catalysis.

It belongs to the FPG family. In terms of assembly, monomer. The cofactor is Zn(2+).

It carries out the reaction Hydrolysis of DNA containing ring-opened 7-methylguanine residues, releasing 2,6-diamino-4-hydroxy-5-(N-methyl)formamidopyrimidine.. The enzyme catalyses 2'-deoxyribonucleotide-(2'-deoxyribose 5'-phosphate)-2'-deoxyribonucleotide-DNA = a 3'-end 2'-deoxyribonucleotide-(2,3-dehydro-2,3-deoxyribose 5'-phosphate)-DNA + a 5'-end 5'-phospho-2'-deoxyribonucleoside-DNA + H(+). In terms of biological role, involved in base excision repair of DNA damaged by oxidation or by mutagenic agents. Acts as a DNA glycosylase that recognizes and removes damaged bases. Has a preference for oxidized purines, such as 7,8-dihydro-8-oxoguanine (8-oxoG). Has AP (apurinic/apyrimidinic) lyase activity and introduces nicks in the DNA strand. Cleaves the DNA backbone by beta-delta elimination to generate a single-strand break at the site of the removed base with both 3'- and 5'-phosphates. In Streptococcus pyogenes serotype M6 (strain ATCC BAA-946 / MGAS10394), this protein is Formamidopyrimidine-DNA glycosylase.